Here is a 380-residue protein sequence, read N- to C-terminus: Bifunctional enzyme IspD/IspF (380 aa).

Residues 1–224 (MTIPATYAAI…ERILGDAMDI (224 aa)) are 2-C-methyl-D-erythritol 4-phosphate cytidylyltransferase. Residues 225–380 (RLGNGFDVHA…SIATATLVKG (156 aa)) are 2-C-methyl-D-erythritol 2,4-cyclodiphosphate synthase. The a divalent metal cation site is built by Asp-231 and His-233. 4-CDP-2-C-methyl-D-erythritol 2-phosphate-binding positions include 231–233 (DVH) and 257–258 (HS). His-265 contacts a divalent metal cation. 4-CDP-2-C-methyl-D-erythritol 2-phosphate contacts are provided by residues 279-281 (DIG), 355-358 (TTSE), Phe-362, and Arg-365.

This sequence in the N-terminal section; belongs to the IspD/TarI cytidylyltransferase family. IspD subfamily. In the C-terminal section; belongs to the IspF family. The cofactor is a divalent metal cation.

The enzyme catalyses 2-C-methyl-D-erythritol 4-phosphate + CTP + H(+) = 4-CDP-2-C-methyl-D-erythritol + diphosphate. It carries out the reaction 4-CDP-2-C-methyl-D-erythritol 2-phosphate = 2-C-methyl-D-erythritol 2,4-cyclic diphosphate + CMP. The protein operates within isoprenoid biosynthesis; isopentenyl diphosphate biosynthesis via DXP pathway; isopentenyl diphosphate from 1-deoxy-D-xylulose 5-phosphate: step 2/6. Its pathway is isoprenoid biosynthesis; isopentenyl diphosphate biosynthesis via DXP pathway; isopentenyl diphosphate from 1-deoxy-D-xylulose 5-phosphate: step 4/6. Bifunctional enzyme that catalyzes the formation of 4-diphosphocytidyl-2-C-methyl-D-erythritol from CTP and 2-C-methyl-D-erythritol 4-phosphate (MEP) (IspD), and catalyzes the conversion of 4-diphosphocytidyl-2-C-methyl-D-erythritol 2-phosphate (CDP-ME2P) to 2-C-methyl-D-erythritol 2,4-cyclodiphosphate (ME-CPP) with a corresponding release of cytidine 5-monophosphate (CMP) (IspF). The chain is Bifunctional enzyme IspD/IspF from Paracoccus denitrificans (strain Pd 1222).